Here is a 904-residue protein sequence, read N- to C-terminus: Translation initiation factor IF-2 (904 aa).

Disordered stretches follow at residues 102–122, 134–252, and 267–316; these read TYVK…PDEE, RQRN…MVAG, and HLSA…ERPT. Basic and acidic residues predominate over residues 134 to 177; sequence RQRNLEEQQRLAESDRVRDEAIQRKREEEQAAKDRAEAERKAAE. A compositionally biased stretch (low complexity) spans 178-230; sequence EAAAAASAPAPVADAPKPSAAAPAARLPSSPSSAPRAARPAGASPASRPAAPA. Residues 403-572 enclose the tr-type G domain; the sequence is SRPPVVTIMG…SLQAEVLELK (170 aa). The G1 stretch occupies residues 412-419; the sequence is GHVDHGKT. 412–419 contacts GTP; that stretch reads GHVDHGKT. Residues 437–441 are G2; it reads GITQH. The segment at 458 to 461 is G3; it reads DTPG. GTP-binding positions include 458–462 and 512–515; these read DTPGH and NKID. Residues 512 to 515 are G4; it reads NKID. Residues 548–550 are G5; sequence SAK.

Belongs to the TRAFAC class translation factor GTPase superfamily. Classic translation factor GTPase family. IF-2 subfamily.

The protein localises to the cytoplasm. Its function is as follows. One of the essential components for the initiation of protein synthesis. Protects formylmethionyl-tRNA from spontaneous hydrolysis and promotes its binding to the 30S ribosomal subunits. Also involved in the hydrolysis of GTP during the formation of the 70S ribosomal complex. The protein is Translation initiation factor IF-2 of Xanthomonas axonopodis pv. citri (strain 306).